The chain runs to 498 residues: Probable cytosol aminopeptidase (498 aa).

Residues Lys-262 and Asp-267 each contribute to the Mn(2+) site. Residue Lys-274 is part of the active site. Positions 285, 344, and 346 each coordinate Mn(2+). Arg-348 is an active-site residue.

This sequence belongs to the peptidase M17 family. Mn(2+) is required as a cofactor.

The protein resides in the cytoplasm. It catalyses the reaction Release of an N-terminal amino acid, Xaa-|-Yaa-, in which Xaa is preferably Leu, but may be other amino acids including Pro although not Arg or Lys, and Yaa may be Pro. Amino acid amides and methyl esters are also readily hydrolyzed, but rates on arylamides are exceedingly low.. It carries out the reaction Release of an N-terminal amino acid, preferentially leucine, but not glutamic or aspartic acids.. Presumably involved in the processing and regular turnover of intracellular proteins. Catalyzes the removal of unsubstituted N-terminal amino acids from various peptides. The sequence is that of Probable cytosol aminopeptidase from Phytoplasma mali (strain AT).